The primary structure comprises 244 residues: Ribosome maturation factor RimM (244 aa).

The disordered stretch occupies residues 1–58 (MSERDSGSSGPVKAKAAAPRAKTSGQAPFGAFVRKPVEKTEGKAKANAANAGSGATEM). The span at 13–22 (KAKAAAPRAK) shows a compositional bias: low complexity. Residues 35–44 (KPVEKTEGKA) show a composition bias toward basic and acidic residues. Positions 45–57 (KANAANAGSGATE) are enriched in low complexity. In terms of domain architecture, PRC barrel spans 163–244 (ADEFYWVDLL…QITVDWEADY (82 aa)).

Belongs to the RimM family. In terms of assembly, binds ribosomal protein uS19.

The protein localises to the cytoplasm. An accessory protein needed during the final step in the assembly of 30S ribosomal subunit, possibly for assembly of the head region. Essential for efficient processing of 16S rRNA. May be needed both before and after RbfA during the maturation of 16S rRNA. It has affinity for free ribosomal 30S subunits but not for 70S ribosomes. The sequence is that of Ribosome maturation factor RimM from Paraburkholderia xenovorans (strain LB400).